Consider the following 314-residue polypeptide: Versiconal hemiacetal acetate esterase (314 aa).

An Involved in the stabilization of the negatively charged intermediate by the formation of the oxyanion hole motif is present at residues 85–87 (HGG). Residues serine 154, aspartate 255, and histidine 285 contribute to the active site.

This sequence belongs to the 'GDXG' lipolytic enzyme family.

It carries out the reaction (2S,3S)-versiconal hemiacetal acetate + H2O = (2S-3S)-versiconal hemiacetal + acetate + H(+). The enzyme catalyses (3S)-versiconol acetate + H2O = (S)-versiconol + acetate + H(+). It participates in mycotoxin biosynthesis; aflatoxin biosynthesis. Functionally, versiconal hemiacetal acetate esterase; part of the gene cluster that mediates the biosynthesis of aflatoxins, a group of polyketide-derived furanocoumarins, and part of the most toxic and carcinogenic compounds among the known mycotoxins. The four major aflatoxins produced by A.parasiticus are aflatoxin B1 (AFB1), aflatoxin B2 (AFB2), aflatoxin G1 (AFG1) and aflatoxin G2 (AFG2). Within the aflatoxin pathway, the versiconal hemiacetal acetate esterase aflJ converts versiconal hemiacetal acetate (VHA) into versiconal (VAL). The biosynthesis of aflatoxins begins with the norsolorinic acid synthase aflC that combines a hexanoyl starter unit produced by the fatty acid synthase aflA/aflB and 7 malonyl-CoA extender units to synthesize the precursor NOR. The second step is the conversion of NOR to averantin and requires the norsolorinic acid ketoreductase aflD, which catalyzes the dehydration of norsolorinic acid to form (1'S)-averantin. The norsolorinic acid reductases aflE and aflF may also play a role in the conversion of NOR to AVN. The cytochrome P450 monooxygenase aflG then catalyzes the hydroxylation of AVN to 5'hydroxyaverantin (HAVN). The next step is performed by the 5'-hydroxyaverantin dehydrogenase aflH that transforms HAVN to 5'-oxoaverantin (OAVN) which is further converted to averufin (AVF) by aflK that plays a dual role in the pathway, as a 5'-oxoaverantin cyclase that mediates conversion of 5'-oxoaverantin, as well as a versicolorin B synthase in a later step in the pathway. The averufin oxidase aflI catalyzes the conversion of AVF to versiconal hemiacetal acetate (VHA). VHA is then the substrate for the versiconal hemiacetal acetate esterase aflJ to yield versiconal (VAL). Versicolorin B synthase aflK then converts VAL to versicolorin B (VERB) by closing the bisfuran ring of aflatoxin which is required for DNA-binding, thus giving to aflatoxin its activity as a mutagen. Then, the activity of the versicolorin B desaturase aflL leads to versicolorin A (VERA). A branch point starts from VERB since it can also be converted to dihydrodemethylsterigmatocystin (DMDHST), probably also by aflL, VERA being a precursor for aflatoxins B1 and G1, and DMDHST for aflatoxins B2 and G2. Next, the versicolorin reductase aflM and the cytochrome P450 monooxygenase aflN are involved in conversion of VERA to demethylsterigmatocystin (DMST). AflX and aflY seem also involved in this step, through probable aflX-mediated epoxide ring-opening step following versicolorin A oxidation and aflY-mediated Baeyer-Villiger oxidation required for the formation of the xanthone ring. The methyltransferase aflO then leads to the modification of DMST to sterigmatocystin (ST), and of DMDHST to dihydrosterigmatocystin (DHST). Both ST and DHST are then substrates of the O-methyltransferase aflP to yield O-methylsterigmatocystin (OMST) and dihydro-O-methylsterigmatocystin (DHOMST), respectively. Finally OMST is converted to aflatoxins B1 and G1, and DHOMST to aflatoxins B2 and G2, via the action of several enzymes including O-methylsterigmatocystin oxidoreductase aflQ, the cytochrome P450 monooxygenase aflU, but also the NADH-dependent flavin oxidoreductase nadA which is specifically required for the synthesis of AFG1. This Aspergillus parasiticus (strain ATCC 56775 / NRRL 5862 / SRRC 143 / SU-1) protein is Versiconal hemiacetal acetate esterase.